The following is a 495-amino-acid chain: Lanosterol 14-alpha demethylase erg11 (495 aa).

Residues 2 to 22 (AFSLVSILLSIALAWYVGYII) traverse the membrane as a helical segment. Heme is bound at residue C442.

It belongs to the cytochrome P450 family. As to quaternary structure, interacts with dap1. Heme serves as cofactor.

It is found in the endoplasmic reticulum. The protein localises to the membrane. The catalysed reaction is a 14alpha-methyl steroid + 3 reduced [NADPH--hemoprotein reductase] + 3 O2 = a Delta(14) steroid + formate + 3 oxidized [NADPH--hemoprotein reductase] + 4 H2O + 4 H(+). It catalyses the reaction a 14alpha-methyl steroid + reduced [NADPH--hemoprotein reductase] + O2 = a 14alpha-hydroxymethyl steroid + oxidized [NADPH--hemoprotein reductase] + H2O + H(+). It carries out the reaction a 14alpha-hydroxymethyl steroid + reduced [NADPH--hemoprotein reductase] + O2 = a 14alpha-formyl steroid + oxidized [NADPH--hemoprotein reductase] + 2 H2O + H(+). The enzyme catalyses a 14alpha-formyl steroid + reduced [NADPH--hemoprotein reductase] + O2 = a Delta(14) steroid + formate + oxidized [NADPH--hemoprotein reductase] + H2O + 2 H(+). The catalysed reaction is lanosterol + 3 reduced [NADPH--hemoprotein reductase] + 3 O2 = 4,4-dimethyl-5alpha-cholesta-8,14,24-trien-3beta-ol + formate + 3 oxidized [NADPH--hemoprotein reductase] + 4 H2O + 4 H(+). It catalyses the reaction lanosterol + reduced [NADPH--hemoprotein reductase] + O2 = 32-hydroxylanosterol + oxidized [NADPH--hemoprotein reductase] + H2O + H(+). It carries out the reaction 32-hydroxylanosterol + reduced [NADPH--hemoprotein reductase] + O2 = 32-oxolanosterol + oxidized [NADPH--hemoprotein reductase] + 2 H2O + H(+). The enzyme catalyses 32-oxolanosterol + reduced [NADPH--hemoprotein reductase] + O2 = 4,4-dimethyl-5alpha-cholesta-8,14,24-trien-3beta-ol + formate + oxidized [NADPH--hemoprotein reductase] + H2O + 2 H(+). The catalysed reaction is eburicol + 3 reduced [NADPH--hemoprotein reductase] + 3 O2 = 14-demethyleburicol + formate + 3 oxidized [NADPH--hemoprotein reductase] + 4 H2O + 4 H(+). It catalyses the reaction eburicol + reduced [NADPH--hemoprotein reductase] + O2 = 32-hydroxyeburicol + oxidized [NADPH--hemoprotein reductase] + H2O + H(+). It carries out the reaction 32-hydroxyeburicol + reduced [NADPH--hemoprotein reductase] + O2 = 32-oxoeburicol + oxidized [NADPH--hemoprotein reductase] + 2 H2O + H(+). The enzyme catalyses 32-oxoeburicol + reduced [NADPH--hemoprotein reductase] + O2 = 14-demethyleburicol + formate + oxidized [NADPH--hemoprotein reductase] + H2O + 2 H(+). It functions in the pathway steroid biosynthesis; zymosterol biosynthesis; zymosterol from lanosterol: step 1/6. The protein operates within steroid metabolism; ergosterol biosynthesis. Its function is as follows. Sterol 14alpha-demethylase that plays a critical role in the third module of ergosterol biosynthesis pathway, being ergosterol the major sterol component in fungal membranes that participates in a variety of functions. The third module or late pathway involves the ergosterol synthesis itself through consecutive reactions that mainly occur in the endoplasmic reticulum (ER) membrane. In filamentous fungi, during the initial step of this module, lanosterol (lanosta-8,24-dien-3beta-ol) can be metabolized to eburicol. Sterol 14alpha-demethylase catalyzes the three-step oxidative removal of the 14alpha-methyl group (C-32) of both these sterols in the form of formate, and converts eburicol and lanosterol to 14-demethyleburicol (4,4,24-trimethylergosta-8,14,24(28)-trienol) and 4,4-dimethyl-5alpha-cholesta-8,14,24-trien-3beta-ol, respectively, which are further metabolized by other enzymes in the pathway to ergosterol. Can also use substrates not intrinsic to fungi, such as 24,25-dihydrolanosterol (DHL), producing 4,4-dimethyl-8,14-cholestadien-3-beta-ol, but at lower rates than the endogenous substrates. The chain is Lanosterol 14-alpha demethylase erg11 from Schizosaccharomyces pombe (strain 972 / ATCC 24843) (Fission yeast).